A 457-amino-acid chain; its full sequence is Solute carrier family 38 member 6 (457 aa).

Residue M1 is modified to N-acetylmethionine. S4 and S7 each carry phosphoserine. The next 5 membrane-spanning stretches (helical) occupy residues 48 to 68 (FGLS…LGLA), 70 to 90 (VMAN…ALLA), 112 to 132 (LGLF…IIIQ), 171 to 191 (LLII…KIGF), and 192 to 212 (LGYT…VVVI). An intrachain disulfide couples C219 to C239. The N-linked (GlcNAc...) asparagine glycan is linked to N234. Residues 251–271 (VYAIPTMAFSFLCHTSVLPIY) form a helical membrane-spanning segment. Residue N284 is glycosylated (N-linked (GlcNAc...) asparagine). Helical transmembrane passes span 289 to 309 (AIAL…LTFY), 328 to 348 (AAVM…VPLI), 372 to 392 (SLTT…VPDI), 395 to 415 (VFGV…PGLF), and 432 to 452 (ALSL…LIIL).

It belongs to the amino acid/polyamine transporter 2 family.

The protein localises to the cell membrane. It is found in the synapse. It catalyses the reaction L-glutamine(out) = L-glutamine(in). The catalysed reaction is L-glutamate(out) = L-glutamate(in). Amino acid transporter with an apparent selectivity for L-glutamine and L-glutamate. May facilitate glutamine uptake in excitatory neurons. The transport mechanism remains to be elucidated. The sequence is that of Solute carrier family 38 member 6 from Rattus norvegicus (Rat).